Here is a 68-residue protein sequence, read N- to C-terminus: DNA-directed RNA polymerase subunit omega (68 aa).

The protein belongs to the RNA polymerase subunit omega family. In terms of assembly, the RNAP catalytic core consists of 2 alpha, 1 beta, 1 beta' and 1 omega subunit. When a sigma factor is associated with the core the holoenzyme is formed, which can initiate transcription.

The enzyme catalyses RNA(n) + a ribonucleoside 5'-triphosphate = RNA(n+1) + diphosphate. Functionally, promotes RNA polymerase assembly. Latches the N- and C-terminal regions of the beta' subunit thereby facilitating its interaction with the beta and alpha subunits. This is DNA-directed RNA polymerase subunit omega from Desulfatibacillum aliphaticivorans.